Consider the following 1401-residue polypeptide: DNA-directed RNA polymerase subunit beta (1401 aa).

This sequence belongs to the RNA polymerase beta chain family. The RNAP catalytic core consists of 2 alpha, 1 beta, 1 beta' and 1 omega subunit. When a sigma factor is associated with the core the holoenzyme is formed, which can initiate transcription.

It carries out the reaction RNA(n) + a ribonucleoside 5'-triphosphate = RNA(n+1) + diphosphate. Its function is as follows. DNA-dependent RNA polymerase catalyzes the transcription of DNA into RNA using the four ribonucleoside triphosphates as substrates. The protein is DNA-directed RNA polymerase subunit beta of Desulforapulum autotrophicum (strain ATCC 43914 / DSM 3382 / VKM B-1955 / HRM2) (Desulfobacterium autotrophicum).